The sequence spans 616 residues: Dihydroxy-acid dehydratase (616 aa).

Asp-81 contacts Mg(2+). Cys-122 provides a ligand contact to [2Fe-2S] cluster. Mg(2+) contacts are provided by Asp-123 and Lys-124. Lys-124 carries the N6-carboxylysine modification. Cys-195 provides a ligand contact to [2Fe-2S] cluster. Glu-491 lines the Mg(2+) pocket. Residue Ser-517 is the Proton acceptor of the active site.

It belongs to the IlvD/Edd family. Homodimer. [2Fe-2S] cluster serves as cofactor. The cofactor is Mg(2+).

It carries out the reaction (2R)-2,3-dihydroxy-3-methylbutanoate = 3-methyl-2-oxobutanoate + H2O. The catalysed reaction is (2R,3R)-2,3-dihydroxy-3-methylpentanoate = (S)-3-methyl-2-oxopentanoate + H2O. The protein operates within amino-acid biosynthesis; L-isoleucine biosynthesis; L-isoleucine from 2-oxobutanoate: step 3/4. It participates in amino-acid biosynthesis; L-valine biosynthesis; L-valine from pyruvate: step 3/4. Functions in the biosynthesis of branched-chain amino acids. Catalyzes the dehydration of (2R,3R)-2,3-dihydroxy-3-methylpentanoate (2,3-dihydroxy-3-methylvalerate) into 2-oxo-3-methylpentanoate (2-oxo-3-methylvalerate) and of (2R)-2,3-dihydroxy-3-methylbutanoate (2,3-dihydroxyisovalerate) into 2-oxo-3-methylbutanoate (2-oxoisovalerate), the penultimate precursor to L-isoleucine and L-valine, respectively. In Escherichia coli O157:H7 (strain EC4115 / EHEC), this protein is Dihydroxy-acid dehydratase.